We begin with the raw amino-acid sequence, 245 residues long: P2Y purinoceptor 13 (245 aa).

Residues 1–9 (QLRAFVCRL) are Extracellular-facing. Cysteine 7 and cysteine 85 are joined by a disulfide. The chain crosses the membrane as a helical span at residues 10 to 30 (SSVIFYETMYVGIVLLGLIAF). Residues 31 to 35 (DRFLK) are Cytoplasmic-facing. The chain crosses the membrane as a helical span at residues 36–56 (IIRPLRNIFLKKTVFAKTVSV). Residues 57–85 (FIWSFFFFISLPNMILSNKEATPSSVKKC) lie on the Extracellular side of the membrane. The chain crosses the membrane as a helical span at residues 86–106 (ASLKGPLGLKWHQIVNNISQF). Residues 107–126 (IFWTVFVLMLVFYVVIAKKV) are Cytoplasmic-facing. The chain crosses the membrane as a helical span at residues 127–147 (YDSYRKSKSKDRKNNKKLEGK). At 148–174 (VFVVVAVFFVCFAPFHFTRVPYTYSQT) the chain is on the extracellular side. Residues 175–195 (NNKTDCRLQNQLFIAKETTLF) form a helical membrane-spanning segment. The Cytoplasmic portion of the chain corresponds to 196-245 (LAATNICMDPLIYIFLCKKFTEKLPCMRGRKTIASSQENQSSQTDNITLG).

This sequence belongs to the G-protein coupled receptor 1 family.

The protein resides in the cell membrane. In terms of biological role, receptor for ADP. Coupled to G(i)-proteins. May play a role in hematopoiesis and the immune system. This chain is P2Y purinoceptor 13 (P2RY13), found in Macaca fascicularis (Crab-eating macaque).